Consider the following 161-residue polypeptide: Large ribosomal subunit protein uL10 (161 aa).

This sequence belongs to the universal ribosomal protein uL10 family. In terms of assembly, part of the ribosomal stalk of the 50S ribosomal subunit. The N-terminus interacts with L11 and the large rRNA to form the base of the stalk. The C-terminus forms an elongated spine to which L12 dimers bind in a sequential fashion forming a multimeric L10(L12)X complex.

Functionally, forms part of the ribosomal stalk, playing a central role in the interaction of the ribosome with GTP-bound translation factors. This is Large ribosomal subunit protein uL10 from Campylobacter curvus (strain 525.92).